We begin with the raw amino-acid sequence, 87 residues long: Putative defensin-like protein 304 (87 aa).

The N-terminal stretch at 1-19 (MKSNKVTFFLGLFLVSAFC) is a signal peptide. Disulfide bonds link Cys-27-Cys-46, Cys-33-Cys-51, and Cys-40-Cys-53.

The protein belongs to the DEFL family.

The protein resides in the secreted. The polypeptide is Putative defensin-like protein 304 (Arabidopsis thaliana (Mouse-ear cress)).